We begin with the raw amino-acid sequence, 457 residues long: Serine/threonine-protein phosphatase 2A regulatory subunit B'' subunit gamma (457 aa).

2 EF-hand domains span residues 276 to 311 and 344 to 379; these read PSALRVYGQYLNLDKDHNGMLSKEELSRYGTGTLTS and KEPAALQYIFKLLDMENKGYLNVFALNYFFRAIQEQ. The Ca(2+) site is built by Asp289, Asp291, Asn293, Met295, and Glu300.

Its subcellular location is the nucleus. The protein localises to the cytoplasm. In terms of biological role, possible role in the regulation of cell death. The protein is Serine/threonine-protein phosphatase 2A regulatory subunit B'' subunit gamma (ppp2r3c) of Danio rerio (Zebrafish).